The chain runs to 185 residues: Urease accessory protein UreE (185 aa).

Residues 153–185 (LRANSAQGHGHSHSHSHDHHGYHHHGDGHWHKH) are disordered. Residues 162 to 175 (GHSHSHSHDHHGYH) show a composition bias toward basic residues. Over residues 176–185 (HHGDGHWHKH) the composition is skewed to basic and acidic residues.

Belongs to the UreE family.

The protein resides in the cytoplasm. Involved in urease metallocenter assembly. Binds nickel. Probably functions as a nickel donor during metallocenter assembly. The sequence is that of Urease accessory protein UreE from Haemophilus influenzae (strain PittEE).